The sequence spans 548 residues: Fumarate hydratase class I, aerobic (548 aa).

[4Fe-4S] cluster contacts are provided by cysteine 105, cysteine 224, and cysteine 318.

This sequence belongs to the class-I fumarase family. Homodimer. [4Fe-4S] cluster is required as a cofactor.

The enzyme catalyses (S)-malate = fumarate + H2O. The catalysed reaction is oxaloacetate = enol-oxaloacetate. The protein operates within carbohydrate metabolism; tricarboxylic acid cycle; (S)-malate from fumarate: step 1/1. Its function is as follows. Catalyzes the reversible hydration of fumarate to (S)-malate. Functions as an aerobic enzyme in the direction of malate formation as part of the citric acid cycle. Accounts for about 80% of the fumarase activity when the bacteria grow aerobically. To a lesser extent, also displays D-tartrate dehydratase activity in vitro, but is not able to convert (R)-malate, L-tartrate or meso-tartrate. Can also catalyze the isomerization of enol- to keto-oxaloacetate. This chain is Fumarate hydratase class I, aerobic, found in Escherichia coli O6:H1 (strain CFT073 / ATCC 700928 / UPEC).